The chain runs to 113 residues: Phosphoribosyl-ATP pyrophosphatase (113 aa).

The protein belongs to the PRA-PH family.

Its subcellular location is the cytoplasm. It catalyses the reaction 1-(5-phospho-beta-D-ribosyl)-ATP + H2O = 1-(5-phospho-beta-D-ribosyl)-5'-AMP + diphosphate + H(+). Its pathway is amino-acid biosynthesis; L-histidine biosynthesis; L-histidine from 5-phospho-alpha-D-ribose 1-diphosphate: step 2/9. The chain is Phosphoribosyl-ATP pyrophosphatase from Hydrogenovibrio crunogenus (strain DSM 25203 / XCL-2) (Thiomicrospira crunogena).